We begin with the raw amino-acid sequence, 190 residues long: MRIGILAIQGSVVEHEKMLKRLEVETVLVKKPEHLDIINGIILPGGESTTFFTLLENRLLFDVLREKLANGLPAMGTCAGLILLANRIENHPDQKTLKVLDITVSRNAYGRQRESFSTYIKIPILGEKEFECVFIRAPQIVEIGKNVKVHATFENKPIFVEEGNILGLTFHPELTDDLRIHEYFLKRCSE.

46-48 (GES) lines the L-glutamine pocket. C78 serves as the catalytic Nucleophile. L-glutamine-binding positions include R106 and 135-136 (IR). Active-site charge relay system residues include H171 and E173.

It belongs to the glutaminase PdxT/SNO family. In the presence of PdxS, forms a dodecamer of heterodimers. Only shows activity in the heterodimer.

It carries out the reaction aldehydo-D-ribose 5-phosphate + D-glyceraldehyde 3-phosphate + L-glutamine = pyridoxal 5'-phosphate + L-glutamate + phosphate + 3 H2O + H(+). The catalysed reaction is L-glutamine + H2O = L-glutamate + NH4(+). Its pathway is cofactor biosynthesis; pyridoxal 5'-phosphate biosynthesis. Functionally, catalyzes the hydrolysis of glutamine to glutamate and ammonia as part of the biosynthesis of pyridoxal 5'-phosphate. The resulting ammonia molecule is channeled to the active site of PdxS. The protein is Pyridoxal 5'-phosphate synthase subunit PdxT of Dictyoglomus turgidum (strain DSM 6724 / Z-1310).